The chain runs to 300 residues: Free fatty acid receptor 1 (300 aa).

Topologically, residues 1-8 (MDLPPQLS) are extracellular. The helical transmembrane segment at 9–31 (FALYVSAFALGFPLNLLAIRGAV) threads the bilayer. Residues 32–41 (SHAKLRLTPS) are Cytoplasmic-facing. Residues 42–64 (LVYTLHLGCSDLLLAITLPLKAV) form a helical membrane-spanning segment. Over 65–79 (EALASGAWPLPLPFC) the chain is Extracellular. Cysteine 79 and cysteine 170 are oxidised to a cystine. Residues 80–101 (PVFALAHFAPLYAGGGFLAALS) traverse the membrane as a helical segment. The Cytoplasmic segment spans residues 102 to 121 (AGRYLGAAFPFGYQAIRRPR). A helical membrane pass occupies residues 122-142 (YSWGVCVAIWALVLCHLGLAL). Over 143 to 178 (GLETSGSWLDNSTSSLGINIPVNGSPVCLEAWDPDS) the chain is Extracellular. The N-linked (GlcNAc...) asparagine glycan is linked to asparagine 153. The helical transmembrane segment at 179–200 (ARPARLSFSILLFFLPLVITAF) threads the bilayer. Residues 201–223 (CYVGCLRALVRSGLSHKRKLRAA) are Cytoplasmic-facing. The chain crosses the membrane as a helical span at residues 224–248 (WVAGGALLTLLLCLGPYNASNVASF). Residues 249-256 (INPDLGGS) lie on the Extracellular side of the membrane. The helical transmembrane segment at 257 to 279 (WRKLGLITGAWSVVLNPLVTGYL) threads the bilayer. The Cytoplasmic segment spans residues 280-300 (GTGPGRGTICVTRTQRGTIQK).

It belongs to the G-protein coupled receptor 1 family. As to expression, expressed in pancreatic islet beta cells (at protein level). Expressed in pancreatic islet beta cells.

The protein localises to the cell membrane. Is also activated by synthetic agonists, such as AM-8182, AM-6331 and TAK-875 (fasiglifam). AM-8182 is a full agonist, while AM-6331 and TAK-875 (fasiglifam) are partial agonists that potentiate the activity of the endogenous ligands, such as alpha-linolenic acid and gamma-linolenic acid. Its function is as follows. G-protein coupled receptor for medium and long chain saturated and unsaturated fatty acids that plays an important role in glucose homeostasis. Fatty acid binding increases glucose-stimulated insulin secretion, and may also enhance the secretion of glucagon-like peptide 1 (GLP-1). May also play a role in bone homeostasis; receptor signaling activates pathways that inhibit osteoclast differentiation. Ligand binding leads to a conformation change that triggers signaling via G-proteins that activate phospholipase C, leading to an increase of the intracellular calcium concentration. Seems to act through a G(q) and G(i)-mediated pathway. Mediates the anti-inflammatory effects of omega-3 polyunsaturated fatty acids (PUFAs) via inhibition of NLRP3 inflammasome activation. The protein is Free fatty acid receptor 1 (Ffar1) of Mus musculus (Mouse).